Reading from the N-terminus, the 355-residue chain is S-adenosylmethionine:tRNA ribosyltransferase-isomerase (355 aa).

This sequence belongs to the QueA family. As to quaternary structure, monomer.

The protein resides in the cytoplasm. The catalysed reaction is 7-aminomethyl-7-carbaguanosine(34) in tRNA + S-adenosyl-L-methionine = epoxyqueuosine(34) in tRNA + adenine + L-methionine + 2 H(+). It functions in the pathway tRNA modification; tRNA-queuosine biosynthesis. In terms of biological role, transfers and isomerizes the ribose moiety from AdoMet to the 7-aminomethyl group of 7-deazaguanine (preQ1-tRNA) to give epoxyqueuosine (oQ-tRNA). This Burkholderia orbicola (strain MC0-3) protein is S-adenosylmethionine:tRNA ribosyltransferase-isomerase.